Reading from the N-terminus, the 36-residue chain is Potassium channel toxin alpha-KTx 2.7 (36 aa).

3 disulfide bridges follow: Cys7–Cys29, Cys13–Cys34, and Cys17–Cys36.

Belongs to the short scorpion toxin superfamily. Potassium channel inhibitor family. Alpha-KTx 02 subfamily. As to expression, expressed by the venom gland.

The protein resides in the secreted. Functionally, inhibitor of voltage-gated potassium channels (Kv). This protein is capable of displacing the binding of radio-labeled noxiustoxin (AC P08815) to rat brain synaptosomes with high affinity (about 100 pM). It is also capable of inhibiting transient potassium-currents (resembling I(A)-type currents), in cultured rat cerebellar granule cells. About 50% of the peak currents are reduced by application of a 1.5 uM solution of this toxin. Is lethal to mice (when less than 100 ug are injected). This Centruroides limpidus (Mexican scorpion) protein is Potassium channel toxin alpha-KTx 2.7.